The chain runs to 1404 residues: DNA-directed RNA polymerase subunit beta' (1404 aa).

The Zn(2+) site is built by C70, C72, C85, and C88. D458, D460, and D462 together coordinate Mg(2+). Residues C813, C887, C894, and C897 each contribute to the Zn(2+) site. The interval 1377 to 1404 is disordered; the sequence is ERRAIAESEAAELEASQAETSDENAAAE.

The protein belongs to the RNA polymerase beta' chain family. As to quaternary structure, the RNAP catalytic core consists of 2 alpha, 1 beta, 1 beta' and 1 omega subunit. When a sigma factor is associated with the core the holoenzyme is formed, which can initiate transcription. It depends on Mg(2+) as a cofactor. Zn(2+) serves as cofactor.

The enzyme catalyses RNA(n) + a ribonucleoside 5'-triphosphate = RNA(n+1) + diphosphate. Its function is as follows. DNA-dependent RNA polymerase catalyzes the transcription of DNA into RNA using the four ribonucleoside triphosphates as substrates. In Polaromonas naphthalenivorans (strain CJ2), this protein is DNA-directed RNA polymerase subunit beta'.